Here is a 426-residue protein sequence, read N- to C-terminus: Gamma-glutamyl phosphate reductase (426 aa).

It belongs to the gamma-glutamyl phosphate reductase family.

The protein localises to the cytoplasm. It catalyses the reaction L-glutamate 5-semialdehyde + phosphate + NADP(+) = L-glutamyl 5-phosphate + NADPH + H(+). The protein operates within amino-acid biosynthesis; L-proline biosynthesis; L-glutamate 5-semialdehyde from L-glutamate: step 2/2. Its function is as follows. Catalyzes the NADPH-dependent reduction of L-glutamate 5-phosphate into L-glutamate 5-semialdehyde and phosphate. The product spontaneously undergoes cyclization to form 1-pyrroline-5-carboxylate. This Ralstonia nicotianae (strain ATCC BAA-1114 / GMI1000) (Ralstonia solanacearum) protein is Gamma-glutamyl phosphate reductase.